Here is a 425-residue protein sequence, read N- to C-terminus: Histidine--tRNA ligase (425 aa).

This sequence belongs to the class-II aminoacyl-tRNA synthetase family. As to quaternary structure, homodimer.

It is found in the cytoplasm. The catalysed reaction is tRNA(His) + L-histidine + ATP = L-histidyl-tRNA(His) + AMP + diphosphate + H(+). This chain is Histidine--tRNA ligase, found in Buchnera aphidicola subsp. Baizongia pistaciae (strain Bp).